Consider the following 269-residue polypeptide: MNKKTRIAITGPIGRMGRMLIKEIQNNKQSHLTVAVVQKKHQLIGQDIGRIIGIGEIGVLISDELNIKKNDFDVLIDFTRPAGTLEYLKYCNKFKKNIVIGTTGFSKEEIDIIKSYSQKIAIIIASNFSIGINLLFQLIKKTTQIIGKDSDINILEYHHRNKIDAPSGTALEIGEVISKVMNWNLNQDSIYYQKGITGIRDAKKIGFSIVRAGNIVGKHTVMFSSCDEEIKITHTASNRMSFARGAIQSALWIHKKNTGLFDMTDVLSL.

11 to 16 (GPIGRM) serves as a coordination point for NAD(+). Position 39 (K39) interacts with NADP(+). Residues 101–103 (GTT) and 125–128 (ASNF) each bind NAD(+). Catalysis depends on H158, which acts as the Proton donor/acceptor. A (S)-2,3,4,5-tetrahydrodipicolinate-binding site is contributed by H159. Catalysis depends on K162, which acts as the Proton donor. Residue 168–169 (GT) participates in (S)-2,3,4,5-tetrahydrodipicolinate binding.

It belongs to the DapB family. In terms of assembly, homotetramer.

It localises to the cytoplasm. It catalyses the reaction (S)-2,3,4,5-tetrahydrodipicolinate + NAD(+) + H2O = (2S,4S)-4-hydroxy-2,3,4,5-tetrahydrodipicolinate + NADH + H(+). The catalysed reaction is (S)-2,3,4,5-tetrahydrodipicolinate + NADP(+) + H2O = (2S,4S)-4-hydroxy-2,3,4,5-tetrahydrodipicolinate + NADPH + H(+). It participates in amino-acid biosynthesis; L-lysine biosynthesis via DAP pathway; (S)-tetrahydrodipicolinate from L-aspartate: step 4/4. Catalyzes the conversion of 4-hydroxy-tetrahydrodipicolinate (HTPA) to tetrahydrodipicolinate. The chain is 4-hydroxy-tetrahydrodipicolinate reductase from Buchnera aphidicola subsp. Acyrthosiphon pisum (strain Tuc7).